Reading from the N-terminus, the 643-residue chain is Thread biopolymer filament subunit alpha (643 aa).

Residues 1 to 13 (MSISQTVSKSYTK) show a composition bias toward polar residues. Residues 1 to 34 (MSISQTVSKSYTKSVSRGGQGVSYSQSSSHKVGG) are disordered. Positions 1 to 191 (MSISQTVSKS…PDTVQHTRIR (191 aa)) are head. The span at 14–31 (SVSRGGQGVSYSQSSSHK) shows a compositional bias: low complexity. The 319-residue stretch at 192–510 (EKQDLQTLNT…KLLDSEETRI (319 aa)) folds into the IF rod domain. Positions 193–227 (KQDLQTLNTKFANLVDQVRTLEQHNAILKAQISMI) are coil 1A. Positions 228–240 (TSPSDTPEGPVNT) are linker 1. The coil 1B stretch occupies residues 241–341 (AVVASTVTAT…YNARVREVQA (101 aa)). Residues 342–362 (AVTGGPTAAYSIRVDNTHQAI) form a linker 12 region. Positions 363–381 (DLTTSLQEMKTHYEVLATK) are coil 2A. A linker 2 region spans residues 382 to 389 (SREEAFTQ). The coil 2B stretch occupies residues 390 to 510 (VQPRIQEMAV…KLLDSEETRI (121 aa)). Residues 511–643 (SHGGGITITT…SSARSSSRIY (133 aa)) are tail. Residues 622-643 (SRAGYSASRKSYSSARSSSRIY) form a disordered region.

Belongs to the intermediate filament family. As to quaternary structure, coiled-coil heterodimer of an alpha and a gamma subunit. Assemble into 10 nm filaments. Forms a massive, conical, intermediate filament biopolymer of approximately 60 cm.

The protein resides in the secreted. It localises to the extracellular space. Functionally, released extracellularly into seawater and provides physical and biological defense against invasive organism by modulation of the viscoelastic properties of mucus. In Eptatretus stoutii (Pacific hagfish), this protein is Thread biopolymer filament subunit alpha.